Consider the following 553-residue polypeptide: Ribonuclease J 2 (553 aa).

Positions 69, 71, 138, and 160 each coordinate Zn(2+). 361 to 365 (RVSGH) is a substrate binding site.

This sequence belongs to the metallo-beta-lactamase superfamily. RNA-metabolizing metallo-beta-lactamase-like family. Bacterial RNase J subfamily. In terms of assembly, homodimer, may be a subunit of the RNA degradosome. The cofactor is Zn(2+).

It is found in the cytoplasm. In terms of biological role, an RNase that has 5'-3' exonuclease and possibly endonuclease activity. Involved in maturation of rRNA and in some organisms also mRNA maturation and/or decay. Has an overlapping but not completely redundant role with RNase J1 in the decay of mRNA. The protein is Ribonuclease J 2 of Streptococcus pyogenes serotype M3 (strain ATCC BAA-595 / MGAS315).